Here is a 97-residue protein sequence, read N- to C-terminus: U-reduvitoxin-Pr11a (97 aa).

The signal sequence occupies residues 1-20 (MKTALFLVFALAFIAVEGKM). 2 consecutive Pacifastin domains span residues 22–59 (RACS…CPPR) and 62–97 (EKSC…KLCL). Cystine bridges form between Cys-24-Cys-42, Cys-37-Cys-56, and Cys-40-Cys-51. The segment at 57–59 (PPR) is pro-Pro-Arg motif necessary for proteolytic processing. Cystine bridges form between Cys-65-Cys-82, Cys-77-Cys-96, and Cys-80-Cys-91.

The protein belongs to the protease inhibitor I19 family. As to expression, expressed by the venom gland.

The protein resides in the secreted. Inhibits trypsin activity and prophenoloxidase (PPO) activation, an enzyme essential for both clotting and insect innate immune responses. It does not inhibit activity of chymotrypsin and protease K, and has no effect on phenoloxidase (PO) activity. The polypeptide is U-reduvitoxin-Pr11a (Platymeris rhadamanthus (Red spot assassin bug)).